A 387-amino-acid chain; its full sequence is Galactokinase (387 aa).

Position 33 to 36 (33 to 36) interacts with substrate; that stretch reads EHTD. Residues serine 67 and 124–130 each bind ATP; that span reads GAGLSSS. Mg(2+) is bound by residues serine 130 and glutamate 162. Aspartate 174 serves as the catalytic Proton acceptor. Tyrosine 224 contacts substrate.

The protein belongs to the GHMP kinase family. GalK subfamily.

Its subcellular location is the cytoplasm. The catalysed reaction is alpha-D-galactose + ATP = alpha-D-galactose 1-phosphate + ADP + H(+). It participates in carbohydrate metabolism; galactose metabolism. Its function is as follows. Catalyzes the transfer of the gamma-phosphate of ATP to D-galactose to form alpha-D-galactose-1-phosphate (Gal-1-P). In Lactiplantibacillus plantarum (strain ATCC BAA-793 / NCIMB 8826 / WCFS1) (Lactobacillus plantarum), this protein is Galactokinase.